The following is a 144-amino-acid chain: Deoxyuridine 5'-triphosphate nucleotidohydrolase (144 aa).

Substrate-binding positions include 63 to 65 (RSG), Asn-76, and 80 to 82 (TID).

This sequence belongs to the dUTPase family. Mg(2+) serves as cofactor.

The enzyme catalyses dUTP + H2O = dUMP + diphosphate + H(+). It participates in pyrimidine metabolism; dUMP biosynthesis; dUMP from dCTP (dUTP route): step 2/2. Its function is as follows. This enzyme is involved in nucleotide metabolism: it produces dUMP, the immediate precursor of thymidine nucleotides and it decreases the intracellular concentration of dUTP so that uracil cannot be incorporated into DNA. In Alkaliphilus metalliredigens (strain QYMF), this protein is Deoxyuridine 5'-triphosphate nucleotidohydrolase.